A 680-amino-acid polypeptide reads, in one-letter code: 1-deoxy-D-xylulose-5-phosphate synthase (680 aa).

Positions 1–17 are enriched in low complexity; sequence MQQSPHSPQSQSLSASA. The interval 1–20 is disordered; it reads MQQSPHSPQSQSLSASAVDS. Residues histidine 113 and 154–156 contribute to the thiamine diphosphate site; that span reads GHS. Aspartate 185 contributes to the Mg(2+) binding site. Thiamine diphosphate contacts are provided by residues 186-187, asparagine 214, phenylalanine 323, and glutamate 408; that span reads GA. Asparagine 214 contributes to the Mg(2+) binding site.

It belongs to the transketolase family. DXPS subfamily. As to quaternary structure, homodimer. Requires Mg(2+) as cofactor. The cofactor is thiamine diphosphate.

It carries out the reaction D-glyceraldehyde 3-phosphate + pyruvate + H(+) = 1-deoxy-D-xylulose 5-phosphate + CO2. Its pathway is metabolic intermediate biosynthesis; 1-deoxy-D-xylulose 5-phosphate biosynthesis; 1-deoxy-D-xylulose 5-phosphate from D-glyceraldehyde 3-phosphate and pyruvate: step 1/1. Its function is as follows. Catalyzes the acyloin condensation reaction between C atoms 2 and 3 of pyruvate and glyceraldehyde 3-phosphate to yield 1-deoxy-D-xylulose-5-phosphate (DXP). The polypeptide is 1-deoxy-D-xylulose-5-phosphate synthase (Psychrobacter cryohalolentis (strain ATCC BAA-1226 / DSM 17306 / VKM B-2378 / K5)).